Reading from the N-terminus, the 413-residue chain is Ferredoxin--NADP reductase (413 aa).

Met-1 carries the N-acetylmethionine modification. The CpcD-like domain maps to 18-76; sequence NRLFVYEVIGLSQSTMTDGLDYPIRRSGSTFITVPLKRMNQEMRRITRMGGKIVSIKPL. The interval 74-120 is disordered; that stretch reads KPLEGDSPLPHTEGIAKPSQSEGSGSEAVANPAPESNKTMTTTPKEK. Polar residues predominate over residues 107-116; it reads PESNKTMTTT. In terms of domain architecture, FAD-binding FR-type spans 133–256; it reads KTPYIGKVLE…TGPVGKEMLL (124 aa). Residues 192–195, 213–215, Tyr-219, 230–232, and Thr-271 each bind FAD; these read RLYS, CVR, and VCS. Positions 195 and 215 each coordinate NADP(+). NADP(+) is bound by residues Thr-271, 303–304, 333–334, 343–347, 372–373, and Glu-411; these read IP, SR, RMYIQ, and GL.

This sequence belongs to the ferredoxin--NADP reductase type 1 family. Purifies with both the classic phycobilisome (PBS) supercomplex (CpcG-PBS) and a photosystem I-associated PBS called CpcL-PBS; it accumulates to a higher level in CpcL-PBS. In both PBS it can be cross-linked to both phycocyanin subunits. It depends on FAD as a cofactor. In terms of processing, acetylated at the N-terminus; 6% of protein in CpcG-PBS and 12% of protein in CpcL-PBS is acetylated.

It is found in the cellular thylakoid membrane. The catalysed reaction is 2 reduced [2Fe-2S]-[ferredoxin] + NADP(+) + H(+) = 2 oxidized [2Fe-2S]-[ferredoxin] + NADPH. This chain is Ferredoxin--NADP reductase, found in Synechocystis sp. (strain ATCC 27184 / PCC 6803 / Kazusa).